The following is a 225-amino-acid chain: Nuclear protein UL4 homolog (225 aa).

Belongs to the alphaherpesvirinae HHV-1 UL4 family.

It is found in the host nucleus. In Equus caballus (Horse), this protein is Nuclear protein UL4 homolog.